The primary structure comprises 81 residues: Acyl carrier protein (81 aa).

The Carrier domain maps to Ala2–Lys77. Ser37 carries the O-(pantetheine 4'-phosphoryl)serine modification.

Belongs to the acyl carrier protein (ACP) family. In terms of processing, 4'-phosphopantetheine is transferred from CoA to a specific serine of apo-ACP by AcpS. This modification is essential for activity because fatty acids are bound in thioester linkage to the sulfhydryl of the prosthetic group.

Its subcellular location is the cytoplasm. It functions in the pathway lipid metabolism; fatty acid biosynthesis. Carrier of the growing fatty acid chain in fatty acid biosynthesis. The chain is Acyl carrier protein from Rhodopirellula baltica (strain DSM 10527 / NCIMB 13988 / SH1).